Consider the following 158-residue polypeptide: NADPH-dependent 7-cyano-7-deazaguanine reductase (158 aa).

Residue Cys56 is the Thioimide intermediate of the active site. Asp63 functions as the Proton donor in the catalytic mechanism. Residues 78–80 and 97–98 contribute to the substrate site; these read LES and HE.

It belongs to the GTP cyclohydrolase I family. QueF type 1 subfamily.

It is found in the cytoplasm. It catalyses the reaction 7-aminomethyl-7-carbaguanine + 2 NADP(+) = 7-cyano-7-deazaguanine + 2 NADPH + 3 H(+). It participates in tRNA modification; tRNA-queuosine biosynthesis. Functionally, catalyzes the NADPH-dependent reduction of 7-cyano-7-deazaguanine (preQ0) to 7-aminomethyl-7-deazaguanine (preQ1). This is NADPH-dependent 7-cyano-7-deazaguanine reductase from Nitrobacter winogradskyi (strain ATCC 25391 / DSM 10237 / CIP 104748 / NCIMB 11846 / Nb-255).